Reading from the N-terminus, the 59-residue chain is Bdellastasin (59 aa).

Intrachain disulfides connect Cys-10/Cys-21, Cys-15/Cys-26, Cys-28/Cys-48, Cys-33/Cys-52, and Cys-37/Cys-54. The Antistasin-like domain maps to 28-54 (CSDLHCKVKCEHGFKKDDNGCEYACIC).

It localises to the secreted. Strong inhibitor of mammalian trypsin, plasmin and acrosin. The chain is Bdellastasin from Hirudo medicinalis (Medicinal leech).